A 334-amino-acid chain; its full sequence is Ketol-acid reductoisomerase (NADP(+)) (334 aa).

The region spanning 3-183 (ATIYYENDAD…GGTRGGVIET (181 aa)) is the KARI N-terminal Rossmann domain. NADP(+)-binding positions include 26–29 (YGSQ), Arg49, Ser52, and 84–87 (DEVQ). Residue His109 is part of the active site. An NADP(+)-binding site is contributed by Gly135. The 146-residue stretch at 184 to 329 (TFAEETETDL…LGLRRMMNWI (146 aa)) folds into the KARI C-terminal knotted domain. Residues Asp192, Glu196, Glu228, and Glu232 each contribute to the Mg(2+) site. Substrate is bound at residue Ser253.

The protein belongs to the ketol-acid reductoisomerase family. Mg(2+) is required as a cofactor.

The enzyme catalyses (2R)-2,3-dihydroxy-3-methylbutanoate + NADP(+) = (2S)-2-acetolactate + NADPH + H(+). It catalyses the reaction (2R,3R)-2,3-dihydroxy-3-methylpentanoate + NADP(+) = (S)-2-ethyl-2-hydroxy-3-oxobutanoate + NADPH + H(+). The protein operates within amino-acid biosynthesis; L-isoleucine biosynthesis; L-isoleucine from 2-oxobutanoate: step 2/4. Its pathway is amino-acid biosynthesis; L-valine biosynthesis; L-valine from pyruvate: step 2/4. Involved in the biosynthesis of branched-chain amino acids (BCAA). Catalyzes an alkyl-migration followed by a ketol-acid reduction of (S)-2-acetolactate (S2AL) to yield (R)-2,3-dihydroxy-isovalerate. In the isomerase reaction, S2AL is rearranged via a Mg-dependent methyl migration to produce 3-hydroxy-3-methyl-2-ketobutyrate (HMKB). In the reductase reaction, this 2-ketoacid undergoes a metal-dependent reduction by NADPH to yield (R)-2,3-dihydroxy-isovalerate. In Rhodopirellula baltica (strain DSM 10527 / NCIMB 13988 / SH1), this protein is Ketol-acid reductoisomerase (NADP(+)).